Consider the following 774-residue polypeptide: Ras and Rab interactor 1 (774 aa).

M1 is modified (N-acetylmethionine). The tract at residues 1 to 52 (MEDPGETEAHPLGATSLNFVPGYQQEEKPSPDPLYDTPDARGVQAGGSQQPA) is disordered. S16 carries the phosphoserine modification. Y35 carries the phosphotyrosine; by ABL1 and ABL2 modification. In terms of domain architecture, SH2 spans 68–162 (WLQLRANAAA…ILLLPLPLPR (95 aa)). 2 disordered regions span residues 188–211 (LNTK…RSPQ) and 249–342 (STET…RPRH). Phosphoserine occurs at positions 209, 257, 330, and 334. Over residues 256-268 (LSPPAVPPPPVPV) the composition is skewed to pro residues. Residues 327–337 (SSGSPTTSPRL) show a composition bias toward low complexity. S351 carries the phosphoserine; by PKD/PRKD1 modification. The VPS9 domain occupies 456–598 (LSTDGSLGRL…LSGLSQAHAL (143 aa)). The residue at position 609 (S609) is a Phosphoserine. The region spanning 624–706 (FQHLLRVAYQ…GYLIYRRAER (83 aa)) is the Ras-associating domain. R692 carries the omega-N-methylarginine modification. A compositionally biased stretch (basic and acidic residues) spans 704 to 766 (AERPETQRAA…GHMQLEEQKA (63 aa)). Residues 704 to 774 (AERPETQRAA…KAEGCPALEE (71 aa)) are disordered.

It belongs to the RIN (Ras interaction/interference) family. As to quaternary structure, interacts with the GTP-bound form of Ras proteins (NRAS, HRAS and KRAS). This interaction prevents the association between RAF1 and Ras. Interacts with 14-3-3 proteins YWHAB, YWHAE and YWHAZ when phosphorylated on Ser-351. Interacts with the SH3 domain of ABL1 and ABL2. Interacts with RAB5A. The interaction with Ras is probably regulated and antagonized by the interaction with 14-3-3 proteins. The interaction with 14-3-3 proteins is regulated by phosphorylation on Ser-351. Post-translationally, phosphorylated on tyrosine residues by ABL1 and ABL2. Phosphorylation at Ser-351 by PRKD1 induces interaction with 14-3-3 proteins.

Its subcellular location is the cytoplasm. It is found in the membrane. It localises to the cytoskeleton. Ras effector protein, which may serve as an inhibitory modulator of neuronal plasticity in aversive memory formation. Can affect Ras signaling at different levels. First, by competing with RAF1 protein for binding to activated Ras. Second, by enhancing signaling from ABL1 and ABL2, which regulate cytoskeletal remodeling. Third, by activating RAB5A, possibly by functioning as a guanine nucleotide exchange factor (GEF) for RAB5A, by exchanging bound GDP for free GTP, and facilitating Ras-activated receptor endocytosis. The protein is Ras and Rab interactor 1 (Rin1) of Rattus norvegicus (Rat).